We begin with the raw amino-acid sequence, 550 residues long: Glypican-1 (550 aa).

Residues 1-20 form the signal peptide; that stretch reads MRFFPWGFWLLCVASAPARG. 7 disulfides stabilise this stretch: Cys-29–Cys-65, Cys-59–Cys-253, Cys-66–Cys-256, Cys-188–Cys-340, Cys-243–Cys-276, Cys-265–Cys-412, and Cys-269–Cys-398. Asn-76 and Asn-113 each carry an N-linked (GlcNAc...) asparagine glycan. Asn-382 is a glycosylation site (N-linked (GlcNAc...) asparagine). Disordered stretches follow at residues 475–494 and 502–522; these read FQDA…CPDD and KSPS…GHGV. A compositionally biased stretch (low complexity) spans 481–494; that stretch reads DMSGSGSGDSCPDD. 3 O-linked (Xyl...) (heparan sulfate) serine glycosylation sites follow: Ser-483, Ser-485, and Ser-487. Gly-524 carries the GPI-anchor amidated glycine lipid modification. Residues 525–550 constitute a propeptide, removed in mature form; it reads ASSRSLPSAFLLFLSGASIVVQHLWR.

Belongs to the glypican family. O-glycosylated with heparan sulfate.

It is found in the cell membrane. Its subcellular location is the endosome. The protein localises to the secreted. It localises to the extracellular space. Its function is as follows. Cell surface proteoglycan that bears heparan sulfate. Modulates Wnt-signaling pathway. The polypeptide is Glypican-1 (GPC1) (Gallus gallus (Chicken)).